Consider the following 640-residue polypeptide: Chaperone protein DnaK (640 aa).

The residue at position 196 (Thr-196) is a Phosphothreonine; by autocatalysis. Disordered regions lie at residues 510-530 (NDAK…ETKN) and 598-640 (AADA…DKDK).

The protein belongs to the heat shock protein 70 family.

In terms of biological role, acts as a chaperone. The sequence is that of Chaperone protein DnaK from Prosthecochloris aestuarii (strain DSM 271 / SK 413).